The following is a 290-amino-acid chain: Shikimate dehydrogenase (NADP(+)) (290 aa).

Shikimate-binding positions include 18-20 (SYS) and T66. The Proton acceptor role is filled by K70. Residue E82 participates in NADP(+) binding. Shikimate is bound by residues N91 and D106. NADP(+)-binding positions include 130 to 134 (GSGGA) and M229. Shikimate is bound at residue Y231. Residue G252 coordinates NADP(+).

It belongs to the shikimate dehydrogenase family. Homodimer.

It catalyses the reaction shikimate + NADP(+) = 3-dehydroshikimate + NADPH + H(+). It participates in metabolic intermediate biosynthesis; chorismate biosynthesis; chorismate from D-erythrose 4-phosphate and phosphoenolpyruvate: step 4/7. In terms of biological role, involved in the biosynthesis of the chorismate, which leads to the biosynthesis of aromatic amino acids. Catalyzes the reversible NADPH linked reduction of 3-dehydroshikimate (DHSA) to yield shikimate (SA). This Chlorobium phaeovibrioides (strain DSM 265 / 1930) (Prosthecochloris vibrioformis (strain DSM 265)) protein is Shikimate dehydrogenase (NADP(+)).